We begin with the raw amino-acid sequence, 96 residues long: Small ribosomal subunit protein bS6 (96 aa).

This sequence belongs to the bacterial ribosomal protein bS6 family.

In terms of biological role, binds together with bS18 to 16S ribosomal RNA. This Streptomyces coelicolor (strain ATCC BAA-471 / A3(2) / M145) protein is Small ribosomal subunit protein bS6 (rpsF).